Consider the following 432-residue polypeptide: MNVLIIGGGGRENAIADAIARSERNPALFAVMAKKNPGIAALCEDFLLAKETDVEKVVGYAREKGIEMVFIGPEAPLAVGLADALEDAGIGAVGPRKNVARIEFDKAWARNFMKDNDIEGSPAFKVFSDKEGLQEYIEELGSVAIKPAGLTGGKGVKVMGDQLPDTGAAYDYAVSLLDGDNVVVEENLVGEEFTVQAFVDGKNLAFTPCVQDHKRAFENDFGPNTGGMGSYSDSDGLLPFVTIDDLYHAREIMKATITALGATETPFKGMLYGQFILTKNGPKVIEFNARFGDPEAMNVLPLLKTDMIDVMSAVVNGTLDELDVEFLKRATVCKYAVPAGYPDEPSKDKEVVVGNIGDALLFYSSVYEKDGKVYTTSSRAVAVVGVANSITDAEVIAQNALENITGDLHFRRDIGTPELVQRRVTHMEQIRR.

One can recognise an ATP-grasp domain in the interval 110–316 (RNFMKDNDIE…MIDVMSAVVN (207 aa)). 137 to 194 (IEELGSVAIKPAGLTGGKGVKVMGDQLPDTGAAYDYAVSLLDGDNVVVEENLVGEEFT) provides a ligand contact to ATP. Mg(2+)-binding residues include Gln-274, Glu-286, and Asn-288. The Mn(2+) site is built by Gln-274, Glu-286, and Asn-288.

The protein belongs to the GARS family. Mg(2+) is required as a cofactor. Requires Mn(2+) as cofactor.

The catalysed reaction is 5-phospho-beta-D-ribosylamine + glycine + ATP = N(1)-(5-phospho-beta-D-ribosyl)glycinamide + ADP + phosphate + H(+). The protein operates within purine metabolism; IMP biosynthesis via de novo pathway; N(1)-(5-phospho-D-ribosyl)glycinamide from 5-phospho-alpha-D-ribose 1-diphosphate: step 2/2. The polypeptide is Phosphoribosylamine--glycine ligase (Methanococcoides burtonii (strain DSM 6242 / NBRC 107633 / OCM 468 / ACE-M)).